Reading from the N-terminus, the 200-residue chain is dTTP/UTP pyrophosphatase (200 aa).

Asp-73 functions as the Proton acceptor in the catalytic mechanism.

Belongs to the Maf family. YhdE subfamily. A divalent metal cation serves as cofactor.

It is found in the cytoplasm. The catalysed reaction is dTTP + H2O = dTMP + diphosphate + H(+). It carries out the reaction UTP + H2O = UMP + diphosphate + H(+). Nucleoside triphosphate pyrophosphatase that hydrolyzes dTTP and UTP. May have a dual role in cell division arrest and in preventing the incorporation of modified nucleotides into cellular nucleic acids. The protein is dTTP/UTP pyrophosphatase of Chromohalobacter salexigens (strain ATCC BAA-138 / DSM 3043 / CIP 106854 / NCIMB 13768 / 1H11).